The following is a 226-amino-acid chain: Movement and silencing protein TGBp1 (226 aa).

The (+)RNA virus helicase ATP-binding domain maps to 1–138 (MDILIISLKS…IASCGFDFET (138 aa)). Residues 139–226 (NSQEEGHLEV…KGLTYVRAGT (88 aa)) form the (+)RNA virus helicase C-terminal domain.

This sequence belongs to the Tymovirales TGBp1 protein family. Homodimer and homooligomer. Interacts with capsid protein. Interacts with host AGO1; this interaction targets the host protein for degradation, thereby suppressing the antiviral RNA silencing.

The protein resides in the host cytoplasm. Functionally, transports viral genome to neighboring plant cells directly through plasmosdesmata, without any budding. The movement protein allows efficient cell to cell propagation, by bypassing the host cell wall barrier. Increases plasmodesma size exclusion limit. Acts as a suppressor of RNA-mediated gene silencing, also known as post-transcriptional gene silencing (PTGS), a mechanism of plant viral defense that limits the accumulation of viral RNAs. The chain is Movement and silencing protein TGBp1 from Brassica campestris (Field mustard).